The sequence spans 56 residues: Small ribosomal subunit protein uS14 (56 aa).

Residues Cys-21, Cys-24, Cys-39, and Cys-42 each coordinate Zn(2+).

It belongs to the universal ribosomal protein uS14 family. As to quaternary structure, component of the 40S small ribosomal subunit. It depends on Zn(2+) as a cofactor.

The protein localises to the cytoplasm. The protein resides in the cytosol. It is found in the rough endoplasmic reticulum. This is Small ribosomal subunit protein uS14 (RpS29) from Plutella xylostella (Diamondback moth).